Reading from the N-terminus, the 248-residue chain is 3-deoxy-manno-octulosonate cytidylyltransferase (248 aa).

This sequence belongs to the KdsB family.

Its subcellular location is the cytoplasm. The catalysed reaction is 3-deoxy-alpha-D-manno-oct-2-ulosonate + CTP = CMP-3-deoxy-beta-D-manno-octulosonate + diphosphate. The protein operates within nucleotide-sugar biosynthesis; CMP-3-deoxy-D-manno-octulosonate biosynthesis; CMP-3-deoxy-D-manno-octulosonate from 3-deoxy-D-manno-octulosonate and CTP: step 1/1. It participates in bacterial outer membrane biogenesis; lipopolysaccharide biosynthesis. Functionally, activates KDO (a required 8-carbon sugar) for incorporation into bacterial lipopolysaccharide in Gram-negative bacteria. The polypeptide is 3-deoxy-manno-octulosonate cytidylyltransferase (Syntrophus aciditrophicus (strain SB)).